The primary structure comprises 483 residues: Pre-glycoprotein polyprotein GP complex (483 aa).

Residue G2 is the site of N-myristoyl glycine; by host attachment. Residues 2-17 lie on the Extracellular side of the membrane; that stretch reads GQFISFMQEIPIFLQE. Residues 18 to 32 traverse the membrane as a helical segment; that stretch reads ALNIALVAVSLICIV. Residue K33 is a topological domain, cytoplasmic. A helical membrane pass occupies residues 34–53; sequence GLVNLYRCGLFQLMVFLVLA. Extracellular segments follow at residues 54–58 and 59–422; these read GRSCS and EETF…TLVD. Residue C57 coordinates Zn(2+). N83 and N95 each carry an N-linked (GlcNAc...) asparagine; by host glycan. 6 disulfide bridges follow: C92-C224, C134-C162, C205-C211, C269-C282, C291-C300, and C354-C375. 2 N-linked (GlcNAc...) asparagine; by host glycosylation sites follow: N164 and N176. Residues N355, N363, N380, and N385 are each glycosylated (N-linked (GlcNAc...) asparagine; by host). Residues 423–443 form a helical membrane-spanning segment; the sequence is ICFWSTVFFTSTLFLHLIGFP. At 444–483 the chain is on the cytoplasmic side; the sequence is THEHIRGEGCPLPHRLNSMGGCRCGKYLPLKKPTIWHRRH. Zn(2+) is bound by residues H445, H447, C453, H457, C465, C467, and H483.

It belongs to the arenaviridae GPC protein family. In terms of assembly, homotetramer; disulfide-linked. Homotetramer. GP2 homotetramers bind through ionic interactions with GP1 homotetramers to form the GP complex together with the stable signal peptide. The GP-C polyprotein interacts with the host protease MBTPS1/SKI-1 resulting in the polyprotein processing. Specific enzymatic cleavages in vivo yield mature proteins. GP-C polyprotein is cleaved in the endoplasmic reticulum by the host protease MBTPS1. Only cleaved glycoprotein is incorporated into virions. Post-translationally, the SSP remains stably associated with the GP complex following cleavage by signal peptidase and plays crucial roles in the trafficking of GP through the secretory pathway. In terms of processing, myristoylation is necessary for GP2-mediated fusion activity.

Its subcellular location is the virion membrane. It is found in the host endoplasmic reticulum membrane. The protein resides in the host Golgi apparatus membrane. The protein localises to the host cell membrane. Functionally, class I viral fusion protein that directs fusion of viral and host endosomal membranes, leading to delivery of the nucleocapsid into the cytoplasm. Membrane fusion is mediated by irreversible conformational changes induced upon acidification in the endosome. Stable signal peptide (SSP): cleaved and functions as a signal peptide. In addition, it is also retained as the third component of the GP complex. The SSP is required for efficient glycoprotein expression, post-translational maturation cleavage of GP1 and GP2, glycoprotein transport to the cell surface plasma membrane, formation of infectious virus particles, and acid pH-dependent glycoprotein-mediated cell fusion. Its function is as follows. Interacts with the host receptor. The chain is Pre-glycoprotein polyprotein GP complex from Tacaribe virus (strain V5) (TCRV).